Consider the following 489-residue polypeptide: Glutamate--tRNA ligase (489 aa).

The short motif at 12–22 (PSPTGIPHVGM) is the 'HIGH' region element. The 'KMSKS' region motif lies at 256 to 260 (KLSKR). Position 259 (Lys-259) interacts with ATP.

The protein belongs to the class-I aminoacyl-tRNA synthetase family. Glutamate--tRNA ligase type 1 subfamily. In terms of assembly, monomer.

It localises to the cytoplasm. The enzyme catalyses tRNA(Glu) + L-glutamate + ATP = L-glutamyl-tRNA(Glu) + AMP + diphosphate. Catalyzes the attachment of glutamate to tRNA(Glu) in a two-step reaction: glutamate is first activated by ATP to form Glu-AMP and then transferred to the acceptor end of tRNA(Glu). The chain is Glutamate--tRNA ligase from Mycobacterium marinum (strain ATCC BAA-535 / M).